The chain runs to 184 residues: RNA 2',3'-cyclic phosphodiesterase (184 aa).

Residue His-42 is the Proton donor of the active site. 2 consecutive short sequence motifs (HXTX) follow at residues 42-45 (HFTL) and 127-130 (HLTV). Residue His-127 is the Proton acceptor of the active site.

This sequence belongs to the 2H phosphoesterase superfamily. ThpR family.

It carries out the reaction a 3'-end 2',3'-cyclophospho-ribonucleotide-RNA + H2O = a 3'-end 2'-phospho-ribonucleotide-RNA + H(+). Hydrolyzes RNA 2',3'-cyclic phosphodiester to an RNA 2'-phosphomonoester. The protein is RNA 2',3'-cyclic phosphodiesterase of Methanothermobacter thermautotrophicus (strain ATCC 29096 / DSM 1053 / JCM 10044 / NBRC 100330 / Delta H) (Methanobacterium thermoautotrophicum).